A 285-amino-acid chain; its full sequence is Probable endonuclease 4 (285 aa).

Zn(2+) is bound by residues His-69, His-109, Glu-145, Asp-179, His-182, His-216, Asp-229, His-231, and Glu-261.

This sequence belongs to the AP endonuclease 2 family. Zn(2+) serves as cofactor.

The catalysed reaction is Endonucleolytic cleavage to 5'-phosphooligonucleotide end-products.. Endonuclease IV plays a role in DNA repair. It cleaves phosphodiester bonds at apurinic or apyrimidinic (AP) sites, generating a 3'-hydroxyl group and a 5'-terminal sugar phosphate. This Salmonella dublin (strain CT_02021853) protein is Probable endonuclease 4.